A 546-amino-acid chain; its full sequence is Methionine--tRNA ligase (546 aa).

Residues 15–25 carry the 'HIGH' region motif; sequence PYANGPIHLGH. Zn(2+)-binding residues include Cys146, Cys149, Cys159, and Cys162. A 'KMSKS' region motif is present at residues 332–336; sequence KMSKS. Lys335 is a binding site for ATP.

Belongs to the class-I aminoacyl-tRNA synthetase family. MetG type 1 subfamily. As to quaternary structure, monomer. Requires Zn(2+) as cofactor.

Its subcellular location is the cytoplasm. It carries out the reaction tRNA(Met) + L-methionine + ATP = L-methionyl-tRNA(Met) + AMP + diphosphate. Functionally, is required not only for elongation of protein synthesis but also for the initiation of all mRNA translation through initiator tRNA(fMet) aminoacylation. The protein is Methionine--tRNA ligase of Coxiella burnetii (strain RSA 331 / Henzerling II).